The chain runs to 634 residues: Formate--tetrahydrofolate ligase (634 aa).

Residue T78–S85 participates in ATP binding.

Belongs to the formate--tetrahydrofolate ligase family. As to quaternary structure, homodimer.

The enzyme catalyses (6S)-5,6,7,8-tetrahydrofolate + formate + ATP = (6R)-10-formyltetrahydrofolate + ADP + phosphate. The protein operates within one-carbon metabolism; tetrahydrofolate interconversion. In Arabidopsis thaliana (Mouse-ear cress), this protein is Formate--tetrahydrofolate ligase (THFS).